The following is a 269-amino-acid chain: Serine/threonine-protein kinase ZRK7 (269 aa).

The Protein kinase domain maps to 80-269 (FDWSYAIGVD…KNRLMVTVIT (190 aa)). ATP-binding positions include 86-94 (IGVDRFVWY) and Lys106. The Proton acceptor role is filled by Asp205.

The protein belongs to the protein kinase superfamily. Ser/Thr protein kinase family. ZRK subfamily.

It catalyses the reaction L-seryl-[protein] + ATP = O-phospho-L-seryl-[protein] + ADP + H(+). The catalysed reaction is L-threonyl-[protein] + ATP = O-phospho-L-threonyl-[protein] + ADP + H(+). In Arabidopsis thaliana (Mouse-ear cress), this protein is Serine/threonine-protein kinase ZRK7.